The chain runs to 381 residues: Class E basic helix-loop-helix protein 22 (381 aa).

Disordered regions lie at residues 30–94 (RLEA…GGGG), 135–154 (RGSV…DSDG), and 188–242 (HLHG…EQKA). A compositionally biased stretch (gly residues) spans 82-94 (GGGGGSAGSGGGG). Residues 198–225 (GGLGGGGGGGSSSGSSGGGGGSGSGSGG) are compositionally biased toward gly residues. The bHLH domain occupies 242–296 (ALRLNINARERRRMHDLNDALDELRAVIPYAHSPSVRKLSKIATLLLAKNYILMQ).

As to quaternary structure, interacts with PRDM8. As to expression, brain-specific, with the highest expression in the cerebellum.

The protein localises to the nucleus. In terms of biological role, inhibits DNA binding of TCF3/E47 homodimers and TCF3 (E47)/NEUROD1 heterodimers and acts as a strong repressor of Neurod1 and Myod-responsive genes, probably by heterodimerization with class a basic helix-loop-helix factors. Despite the presence of an intact basic domain, does not bind to DNA. In the brain, may function as an area-specific transcription factor that regulates the postmitotic acquisition of area identities and elucidate the genetic hierarchy between progenitors and postmitotic neurons driving neocortical arealization. May be required for the survival of a specific population of inhibitory neurons in the superficial laminae of the spinal cord dorsal horn that may regulate pruritis. Seems to play a crucial role in the retinogenesis, in the specification of amacrine and bipolar subtypes. Forms with PRDM8 a transcriptional repressor complex controlling genes involved in neural development and neuronal differentiation. The sequence is that of Class E basic helix-loop-helix protein 22 (BHLHE22) from Homo sapiens (Human).